The chain runs to 347 residues: NADH-ubiquinone oxidoreductase chain 2 (347 aa).

The next 10 membrane-spanning stretches (helical) occupy residues Pro3–Ser23, Tyr59–Leu79, Pro95–Val115, Gly127–Pro147, Ile149–Gly169, Ile178–Pro198, Thr200–Met220, Val241–Ile261, Gly274–Met294, and Leu325–Val345.

It belongs to the complex I subunit 2 family. In terms of assembly, core subunit of respiratory chain NADH dehydrogenase (Complex I) which is composed of 45 different subunits. Interacts with TMEM242.

It localises to the mitochondrion inner membrane. The catalysed reaction is a ubiquinone + NADH + 5 H(+)(in) = a ubiquinol + NAD(+) + 4 H(+)(out). In terms of biological role, core subunit of the mitochondrial membrane respiratory chain NADH dehydrogenase (Complex I) which catalyzes electron transfer from NADH through the respiratory chain, using ubiquinone as an electron acceptor. Essential for the catalytic activity and assembly of complex I. The polypeptide is NADH-ubiquinone oxidoreductase chain 2 (Oryctolagus cuniculus (Rabbit)).